A 214-amino-acid polypeptide reads, in one-letter code: Variable small protein 24 (214 aa).

The signal sequence occupies residues 1–18 (MRKRISAIIMTLFMVFMS). The N-palmitoyl cysteine moiety is linked to residue C19. Residue C19 is the site of S-diacylglycerol cysteine attachment. The disordered stretch occupies residues 146–172 (TELGKKDASDDDTKKAIKKDNSDKTKG).

This sequence belongs to the variable small protein (Vsp) family.

The protein resides in the cell outer membrane. Functionally, the Vlp and Vsp proteins are antigenically distinct proteins, only one vlp or vsp gene is transcriptionally active at any one time. Switching between these genes is a mechanism of host immune response evasion. In Borrelia hermsii, this protein is Variable small protein 24.